We begin with the raw amino-acid sequence, 1205 residues long: Transcriptional-regulating factor 1 (1205 aa).

Disordered regions lie at residues 201–226 (YQQVPQQPHPGFTGGLPKPALPVGQH), 270–317 (YPQP…QRQS), 332–351 (QHLQEQQQPSMHLQPPSYHR), 390–500 (PQSH…QTKG), 527–583 (LNGH…PEAE), and 601–629 (PKPSSQGFTNSVAATPAARDKPASSMSDD). Composition is skewed to low complexity over residues 291-317 (QQQQQPQQIRPSPPQQQQQLQLQQRQS) and 332-342 (QHLQEQQQPSM). Composition is skewed to polar residues over residues 406–417 (KTYSSDRQTPAM), 437–447 (SEMTRVTSTLP), and 487–498 (QSGSPESSSGQT). Residue Ser-490 is modified to Phosphoserine. Residues 512 to 534 (LTCSICLKEFKSLPALNGHMRSH) form a C2H2-type 1 zinc finger. The span at 551 to 579 (APPPQPQPQPQPQQPLPPPPPPPPPPQLP) shows a compositional bias: pro residues. Residues 604–613 (SSQGFTNSVA) show a composition bias toward polar residues. 2 positions are modified to N6-acetyllysine: Lys-639 and Lys-646. At Thr-773 the chain carries Phosphothreonine. The region spanning 785-876 (PRINIGLRFQ…ATLEMLLLRK (92 aa)) is the ELM2 domain. The SANT domain occupies 891-942 (AGSDKWTSLERKLFNKALATYSKDFIFVQKMVKSKTVAQCVEYYYTWKKIMR). A compositionally biased stretch (acidic residues) spans 956–975 (DDCMTSEEEEEAEEEEEDPE). Disordered regions lie at residues 956 to 1016 (DDCM…QQPS) and 1043 to 1087 (HGGT…GETD). Thr-960 carries the post-translational modification Phosphothreonine. Residue Ser-961 is modified to Phosphoserine. Over residues 976–990 (EDRKSIKEEESEVAK) the composition is skewed to basic and acidic residues. The segment at 1019–1043 (FICEMPNCGAVFSSRQALNGHARIH) adopts a C2H2-type 2 zinc-finger fold. Over residues 1072–1086 (SVKSSPSHSTTSGET) the composition is skewed to low complexity. Residues 1092–1114 (FPCKECGKVFFKIKSRNAHMKTH) form a C2H2-type 3 zinc finger.

Interacts with CREBBP and EP300. Interacts with DNTTIP1 and DNTT. In terms of tissue distribution, highly expressed in kidney, lung and brain. In the brain, expression was seen in the basal ganglia, hippocampus, piriform cortex, cerebral cortex, ventromedial nucleus of the hypothalamus and the dorsal and superior central nuclei of the raphe.

Its subcellular location is the nucleus. Its function is as follows. Binds DNA and activates transcription of CYP11A1. Interaction with CREBBP and EP300 results in a synergistic transcriptional activation of CYP11A1. In Mus musculus (Mouse), this protein is Transcriptional-regulating factor 1 (Trerf1).